The following is a 396-amino-acid chain: NADH-quinone oxidoreductase subunit D (396 aa).

The protein belongs to the complex I 49 kDa subunit family. NDH-1 is composed of 14 different subunits. Subunits NuoB, C, D, E, F, and G constitute the peripheral sector of the complex.

The protein localises to the cell inner membrane. It catalyses the reaction a quinone + NADH + 5 H(+)(in) = a quinol + NAD(+) + 4 H(+)(out). In terms of biological role, NDH-1 shuttles electrons from NADH, via FMN and iron-sulfur (Fe-S) centers, to quinones in the respiratory chain. The immediate electron acceptor for the enzyme in this species is believed to be ubiquinone. Couples the redox reaction to proton translocation (for every two electrons transferred, four hydrogen ions are translocated across the cytoplasmic membrane), and thus conserves the redox energy in a proton gradient. This chain is NADH-quinone oxidoreductase subunit D, found in Bartonella bacilliformis (strain ATCC 35685 / KC583 / Herrer 020/F12,63).